The following is a 453-amino-acid chain: Growth/differentiation factor 9 (453 aa).

The signal sequence occupies residues 1 to 27 (MALPNKFFLWFCCFAWLCFPISLDSLP). Residues 28 to 318 (SRGEAQIVAR…EGVRSSRHRR (291 aa)) constitute a propeptide that is removed on maturation. 4 N-linked (GlcNAc...) asparagine glycosylation sites follow: asparagine 163, asparagine 236, asparagine 255, and asparagine 269. Residues 282–328 (LHPKRKPSQGPDQRRELSAYPVGEEAAEGVRSSRHRRDQESVSSELK) are disordered. Residues 318–328 (RDQESVSSELK) are compositionally biased toward basic and acidic residues. Asparagine 337 carries N-linked (GlcNAc...) asparagine glycosylation. Disulfide bonds link cysteine 352–cysteine 418, cysteine 381–cysteine 450, and cysteine 385–cysteine 452.

This sequence belongs to the TGF-beta family. In terms of assembly, homodimer or heterodimer (Potential). But, in contrast to other members of this family, cannot be disulfide-linked. Post-translationally, phosphorylated; phosphorylation is critical for GDF9 function.

The protein resides in the secreted. Its function is as follows. Required for ovarian folliculogenesis. This chain is Growth/differentiation factor 9 (GDF9), found in Capra hircus (Goat).